Here is a 1505-residue protein sequence, read N- to C-terminus: G patch domain-containing protein 8 (1505 aa).

The G-patch domain occupies 40-86; the sequence is SDNIGHRLLQKHGWKLGQGLGKSLQGRTDPIPIVVKYDVMGMGRMEM. The stretch at 89 to 124 forms a coiled coil; sequence DYAEDATERRRVLEVEKEDTEELRQKYKDYVDKEKA. A C2H2-type zinc finger spans residues 136 to 160; that stretch reads FYCELCDKQYQKHQEFDNHINSYDH. Basic and acidic residues-rich tracts occupy residues 166–175 and 182–206; these read LKDLKQREFA and SRKD…RKQA. The tract at residues 166–244 is disordered; sequence LKDLKQREFA…SSTNSGASAV (79 aa). Residues 223 to 233 show a composition bias toward acidic residues; the sequence is VDEDGGEEDKD. Lys-311 is covalently cross-linked (Glycyl lysine isopeptide (Lys-Gly) (interchain with G-Cter in SUMO2)). Basic and acidic residues-rich tracts occupy residues 322–339 and 421–436; these read HAEE…EKSS and EGDH…ENRK. Disordered regions lie at residues 322–393 and 419–537; these read HAEE…EPEY and QMEG…FPVL. Residues 437 to 449 show a composition bias toward polar residues; the sequence is SSSPKPQGCSKTA. Lys-479 bears the N6-acetyllysine mark. Lys-573 is covalently cross-linked (Glycyl lysine isopeptide (Lys-Gly) (interchain with G-Cter in SUMO2)). Basic and acidic residues-rich tracts occupy residues 575 to 612 and 648 to 665; these read SRNK…KSQE and SETE…EPSG. The disordered stretch occupies residues 575 to 1304; it reads SRNKDAKAKG…ESTDGTEDAS (730 aa). Residue Ser-648 is modified to Phosphoserine. Residues 666–687 show a composition bias toward basic residues; the sequence is KSHRHKKKKKHKKSSKHKRKHK. A compositionally biased stretch (basic and acidic residues) spans 688–702; sequence ADTEEKSSKAESGEK. The span at 703-715 shows a compositional bias: basic residues; it reads SKKRKKRKRKKNK. A phosphoserine mark is found at Ser-733, Ser-735, and Ser-753. Over residues 745–767 the composition is skewed to basic and acidic residues; it reads AQDDSQRRSLPAEEGNSGKKDDG. Over residues 794 to 804 the composition is skewed to basic residues; that stretch reads ANTKHSSRSSH. Residues 832–849 show a composition bias toward acidic residues; sequence SEEEEEEEEEEEEEDEDS. Basic residues predominate over residues 856–871; sequence SRSRSGHRHSSHRSSR. The segment covering 872–900 has biased composition (low complexity); it reads RSYSSSSDASSDQSCYSRQHSYSDDSYSD. 2 positions are modified to phosphoserine: Ser-915 and Ser-918. Residues 923–932 are compositionally biased toward basic residues; the sequence is SKHRSKRHKY. Phosphoserine occurs at positions 985, 1013, 1018, 1037, and 1039. A compositionally biased stretch (basic and acidic residues) spans 1017–1031; it reads ESPEERRSGRRDFIR. The span at 1050–1063 shows a compositional bias: basic and acidic residues; that stretch reads GPGKKEDGRGDDSK. Ser-1085 carries the post-translational modification Phosphoserine. 3 stretches are compositionally biased toward basic and acidic residues: residues 1097-1112, 1163-1185, and 1211-1220; these read LLEK…KPNV, KKCE…EEGS, and EEPKSEEATA. Residue Lys-1109 forms a Glycyl lysine isopeptide (Lys-Gly) (interchain with G-Cter in SUMO2) linkage. Ser-1179 bears the Phosphoserine mark.

This is G patch domain-containing protein 8 (Gpatch8) from Mus musculus (Mouse).